Reading from the N-terminus, the 198-residue chain is Probable GTP-binding protein EngB (198 aa).

An EngB-type G domain is found at 22-195; it reads DLPEIALAGR…WKAIHKMTKT (174 aa). GTP is bound by residues 30–37, 57–61, 75–78, 142–145, and 174–176; these read GRSNVGKS, GKTQT, DVPG, TKAD, and FSS. Mg(2+) is bound by residues Ser-37 and Thr-59.

The protein belongs to the TRAFAC class TrmE-Era-EngA-EngB-Septin-like GTPase superfamily. EngB GTPase family. The cofactor is Mg(2+).

Necessary for normal cell division and for the maintenance of normal septation. This Bacillus cereus (strain G9842) protein is Probable GTP-binding protein EngB.